A 335-amino-acid polypeptide reads, in one-letter code: Putative peroxisomal biogenesis factor 19 (335 aa).

Disordered stretches follow at residues 14–70 (LETQ…LGND) and 104–124 (YNKD…PSEE). Low complexity-rich tracts occupy residues 22 to 55 (PTTT…PSTI) and 109 to 119 (NNNSDDSNNGG).

Belongs to the peroxin-19 family.

Its subcellular location is the peroxisome. This chain is Putative peroxisomal biogenesis factor 19 (pex19), found in Dictyostelium discoideum (Social amoeba).